Consider the following 515-residue polypeptide: 1-pyrroline-5-carboxylate dehydrogenase (515 aa).

Active-site residues include glutamate 286 and cysteine 320.

This sequence belongs to the aldehyde dehydrogenase family. RocA subfamily.

It catalyses the reaction L-glutamate 5-semialdehyde + NAD(+) + H2O = L-glutamate + NADH + 2 H(+). Its pathway is amino-acid degradation; L-proline degradation into L-glutamate; L-glutamate from L-proline: step 2/2. This chain is 1-pyrroline-5-carboxylate dehydrogenase (rocA), found in Bacillus subtilis (strain 168).